Here is a 383-residue protein sequence, read N- to C-terminus: Meiotic recombination protein SPO11-2 (383 aa).

A Topo IIA-type catalytic domain is found at leucine 24 to leucine 167. Tyrosine 124 acts as the O-(5'-phospho-DNA)-tyrosine intermediate in catalysis. 2 residues coordinate Mg(2+): glutamate 217 and aspartate 270.

The protein belongs to the TOP6A family. Heterotetramer of 2 SPO11 (SPO11-1 and/or SPO11-2) and 2 MTOPVIB chains. Interacts with MTOPVIB. May form a heterodimer with SPO11-1. Interacts with PRD1. Does not interact with TOP6B. Mg(2+) serves as cofactor. In terms of tissue distribution, very low expression in flowers and shoots.

It is found in the nucleus. It catalyses the reaction ATP-dependent breakage, passage and rejoining of double-stranded DNA.. In terms of biological role, component of a topoisomerase 6 complex specifically required for meiotic recombination. Together with MTOPVIB, mediates DNA cleavage that forms the double-strand breaks (DSB) that initiate meiotic recombination. The complex promotes relaxation of negative and positive supercoiled DNA and DNA decatenation through cleavage and ligation cycles. This chain is Meiotic recombination protein SPO11-2 (SPO11-2), found in Arabidopsis thaliana (Mouse-ear cress).